Here is a 992-residue protein sequence, read N- to C-terminus: Disks large-associated protein 1 (992 aa).

2 disordered regions span residues 154-209 (SLEG…SWWS) and 355-375 (KAMGDEDSGDSDTSPKPSPKV). S169 is modified (phosphoserine). A compositionally biased stretch (low complexity) spans 195–209 (SNASNASPTSPSWWS). 13 positions are modified to phosphoserine: S362, S365, S368, S372, S389, S418, S421, S425, S428, S437, S509, S516, and S578. Phosphothreonine is present on T579. Residues S581 and S605 each carry the phosphoserine modification. T606 carries the phosphothreonine modification. S608 and S611 each carry phosphoserine. Interaction with DYL2 stretches follow at residues 665 to 676 (LSIGIQVDDAEE) and 687 to 698 (SKFQSVGVQVEE). The segment at 914-980 (WKQMDPLDKK…QNSATESAES (67 aa)) is disordered. 2 stretches are compositionally biased toward basic and acidic residues: residues 918–927 (DPLDKKERRA) and 943–958 (IRERSLESSQRQEARK). S947 bears the Phosphoserine mark. The span at 969-978 (VRQNSATESA) shows a compositional bias: polar residues. A PDZ-binding motif is present at residues 990–992 (TRL).

Belongs to the SAPAP family. Interacts with guanylate kinase-like domain of DLG1, DLG2, DLG3, DLG4 and AIP1. Interacts with the PDZ domain of SHANK1, SHANK2 and SHANK3. Found in a complex with DLG4 and SHANK1, SHANK2 or SHANK3. Found in a complex with DLG4 and BEGAIN. Interacts with DYL2 and LRFN1. Interacts with MPP2 (via the SH3-Guanylate kinase-like sub-module). Ubiquitinated by TRIM3; leading to proteasomal degradation. Expressed in brain and testis.

It localises to the cell membrane. The protein localises to the postsynaptic density. Its subcellular location is the synapse. Part of the postsynaptic scaffold in neuronal cells. The protein is Disks large-associated protein 1 of Rattus norvegicus (Rat).